Reading from the N-terminus, the 136-residue chain is Small ribosomal subunit protein bS16 (136 aa).

The segment covering 113–122 has biased composition (basic residues); that stretch reads LALKSHRRSA. The disordered stretch occupies residues 113–136; that stretch reads LALKSHRRSAKKEAEAKAATGGEA.

Belongs to the bacterial ribosomal protein bS16 family.

In Pelodictyon phaeoclathratiforme (strain DSM 5477 / BU-1), this protein is Small ribosomal subunit protein bS16.